The following is a 350-amino-acid chain: Aldo-keto reductase 1B (350 aa).

Y84 acts as the Proton donor in catalysis. H146 serves as a coordination point for substrate. 244-306 (SPLGSPNRPW…SVTKDRIESN (63 aa)) lines the NADP(+) pocket.

This sequence belongs to the aldo/keto reductase family.

The protein localises to the cytoplasm. The catalysed reaction is an alditol + NADP(+) = an aldose + NADPH + H(+). The enzyme catalyses all-trans-retinol + NADP(+) = all-trans-retinal + NADPH + H(+). It catalyses the reaction 9-cis-retinol + NADP(+) = 9-cis-retinal + NADPH + H(+). It carries out the reaction 13-cis-retinol + NADP(+) = 13-cis-retinal + NADPH + H(+). The catalysed reaction is glycerol + NADP(+) = D-glyceraldehyde + NADPH + H(+). The enzyme catalyses glycerol + NADP(+) = L-glyceraldehyde + NADPH + H(+). It catalyses the reaction prenol + NADP(+) = 3-methyl-2-butenal + NADPH + H(+). It carries out the reaction (E)-hex-2-en-1-ol + NADP(+) = (E)-hex-2-enal + NADPH + H(+). The catalysed reaction is (E,E)-2,4-hexadien-1-ol + NADP(+) = (E,E)-2,4-hexadienal + NADPH + H(+). The enzyme catalyses a 4-hydroxynonen-1-ol + NADP(+) = a 4-hydroxynonenal + NADPH + H(+). It catalyses the reaction prostaglandin F2alpha + NADP(+) = prostaglandin H2 + NADPH + H(+). It carries out the reaction allyl alcohol + NADP(+) = acrolein + NADPH + H(+). The catalysed reaction is pyridine 3-methanol + NADP(+) = pyridine-3-carbaldehyde + NADPH + H(+). The enzyme catalyses 1-hexadecanoyl-2-(5-oxopentanoyl)-sn-glycero-3-phosphocholine + NADPH + H(+) = 1-hexadecanoyl-2-(5-hydroxypentanoyl)-sn-glycero-3-phosphocholine + NADP(+). It catalyses the reaction 1-hexadecanoyl-2-(7-oxoheptanoyl)-sn-glycero-3-phosphocholine + NADPH + H(+) = 1-hexadecanoyl-2-(7-hydroxyheptanoyl)-sn-glycero-3-phosphocholine + NADP(+). It carries out the reaction 1-hexadecanoyl-2-(9-oxononanoyl)-sn-glycero-3-phosphocholine + NADPH + H(+) = 1-hexadecanoyl-2-(9-hydroxynonanoyl)-sn-glycero-3-phosphocholine + NADP(+). The catalysed reaction is 1-hexadecanoyl-2-(5-oxopentanoyl)-sn-glycero-3-phosphoethanolamine + NADPH + H(+) = 1-hexadecanoyl-2-(5-hydroxypentanoyl)-sn-glycero-3-phosphoethanolamine + NADP(+). Its function is as follows. Catalyzes the NADPH-dependent reduction of a wide variety of carbonyl-containing compounds to their corresponding alcohols. Displays enzymatic activity towards endogenous metabolites such as aromatic and aliphatic aldehydes, ketones, monosaccharides, bile acids and xenobiotics substrates. Key enzyme in the polyol pathway, catalyzes reduction of glucose to sorbitol during hyperglycemia. Reduces steroids and their derivatives and prostaglandins. Through production of prostaglandin F2alpha may regulate the activity of non-muscle myosin II in an autocrine or paracrine fashion; influences border cell and nurse cell stiffness to facilitate border cell cluster migration. Also regulates the cell surface localization of integrins in an autocrine or paracrine fashion; influences border cell adhesion to maintain border cell cluster morphology. In hemocytes, probably contributes to production of sugar alcohols in the hemolymph, which act as alarmins involved in gut-fat body innate immunological communication (GFIC); leads to activation of the imd/Relish signaling pathway in the fat body. In Drosophila melanogaster (Fruit fly), this protein is Aldo-keto reductase 1B.